A 430-amino-acid polypeptide reads, in one-letter code: Enolase (430 aa).

Position 163 (glutamine 163) interacts with (2R)-2-phosphoglycerate. The active-site Proton donor is glutamate 205. Positions 242, 288, and 315 each coordinate Mg(2+). (2R)-2-phosphoglycerate is bound by residues lysine 340, arginine 369, serine 370, and lysine 391. The Proton acceptor role is filled by lysine 340.

It belongs to the enolase family. Mg(2+) serves as cofactor.

The protein localises to the cytoplasm. It is found in the secreted. Its subcellular location is the cell surface. The catalysed reaction is (2R)-2-phosphoglycerate = phosphoenolpyruvate + H2O. It participates in carbohydrate degradation; glycolysis; pyruvate from D-glyceraldehyde 3-phosphate: step 4/5. In terms of biological role, catalyzes the reversible conversion of 2-phosphoglycerate (2-PG) into phosphoenolpyruvate (PEP). It is essential for the degradation of carbohydrates via glycolysis. The protein is Enolase of Phytoplasma australiense.